The chain runs to 191 residues: Repressor Rok (191 aa).

Residues 2–43 (FNEREALRLRLEQLNEAEVKVIREYQIERDKIYAKLRELDRN) adopt a coiled-coil conformation. Low complexity predominate over residues 75-96 (SYQPQSQQQSVQPQLQSISSLP). The interval 75–116 (SYQPQSQQQSVQPQLQSISSLPAGIPDGTTRRRRGTARPGSK) is disordered. Residues 95 to 191 (LPAGIPDGTT…EIESAESANE (97 aa)) are DNA-binding.

It is found in the cytoplasm. Its subcellular location is the nucleoid. Its function is as follows. Repressor of comK, the master regulator of competence development. Overexpression seems to be lethal. Represses at least 20 genes that specify membrane-localized and secreted proteins, including some that encode products with antibiotic activity. Binds to many AT-rich sites in the chromosome, many of which are known or thought to derive from horizontal gene transfer; helps keep mobile element ICEBs1 quiescent in the genome. Binds to its own promoter and is thus probably autoregulatory. The polypeptide is Repressor Rok (Bacillus subtilis (strain 168)).